We begin with the raw amino-acid sequence, 250 residues long: uncharacterized protein (250 aa).

This is an uncharacterized protein from Sulfolobus islandicus filamentous virus (isolate Iceland/Hveragerdi) (SIFV).